A 217-amino-acid chain; its full sequence is Probable transaldolase (217 aa).

Lys83 serves as the catalytic Schiff-base intermediate with substrate.

This sequence belongs to the transaldolase family. Type 3B subfamily.

The protein resides in the cytoplasm. The enzyme catalyses D-sedoheptulose 7-phosphate + D-glyceraldehyde 3-phosphate = D-erythrose 4-phosphate + beta-D-fructose 6-phosphate. It functions in the pathway carbohydrate degradation; pentose phosphate pathway; D-glyceraldehyde 3-phosphate and beta-D-fructose 6-phosphate from D-ribose 5-phosphate and D-xylulose 5-phosphate (non-oxidative stage): step 2/3. Its function is as follows. Transaldolase is important for the balance of metabolites in the pentose-phosphate pathway. This Methanocaldococcus jannaschii (strain ATCC 43067 / DSM 2661 / JAL-1 / JCM 10045 / NBRC 100440) (Methanococcus jannaschii) protein is Probable transaldolase (tal).